We begin with the raw amino-acid sequence, 210 residues long: Probable GTP-binding protein EngB (210 aa).

Residues 30-204 (QGYEVAFAGR…YRVLADWMEL (175 aa)) enclose the EngB-type G domain. GTP is bound by residues 38 to 45 (GRSNAGKS), 64 to 68 (GRTQL), 82 to 85 (DLPG), 149 to 152 (TKAD), and 182 to 185 (LFSA). Mg(2+) contacts are provided by Ser-45 and Thr-66.

The protein belongs to the TRAFAC class TrmE-Era-EngA-EngB-Septin-like GTPase superfamily. EngB GTPase family. Requires Mg(2+) as cofactor.

Functionally, necessary for normal cell division and for the maintenance of normal septation. The sequence is that of Probable GTP-binding protein EngB from Pseudomonas putida (strain ATCC 47054 / DSM 6125 / CFBP 8728 / NCIMB 11950 / KT2440).